A 201-amino-acid chain; its full sequence is dTTP/UTP pyrophosphatase (201 aa).

The Proton acceptor role is filled by Asp-73.

This sequence belongs to the Maf family. YhdE subfamily. The cofactor is a divalent metal cation.

It localises to the cytoplasm. The catalysed reaction is dTTP + H2O = dTMP + diphosphate + H(+). The enzyme catalyses UTP + H2O = UMP + diphosphate + H(+). Nucleoside triphosphate pyrophosphatase that hydrolyzes dTTP and UTP. May have a dual role in cell division arrest and in preventing the incorporation of modified nucleotides into cellular nucleic acids. The protein is dTTP/UTP pyrophosphatase of Pseudomonas aeruginosa (strain ATCC 15692 / DSM 22644 / CIP 104116 / JCM 14847 / LMG 12228 / 1C / PRS 101 / PAO1).